Consider the following 177-residue polypeptide: FANCD2 opposite strand protein (177 aa).

In Homo sapiens (Human), this protein is FANCD2 opposite strand protein (FANCD2OS).